The primary structure comprises 466 residues: Uronate isomerase (466 aa).

It belongs to the metallo-dependent hydrolases superfamily. Uronate isomerase family.

It carries out the reaction D-glucuronate = D-fructuronate. It catalyses the reaction aldehydo-D-galacturonate = keto-D-tagaturonate. Its pathway is carbohydrate metabolism; pentose and glucuronate interconversion. In Streptococcus pneumoniae (strain 70585), this protein is Uronate isomerase.